Consider the following 190-residue polypeptide: MSIILGIDPGSRVTGYGVIRQTGRHLEYLGSGAIRTQVEDLPTRLKRIYAGVTEIITQFQPNMFAIEQVFMAKNADSALKLGQARGTAIVAAVNNDLPVFEYAARLVKQTVVGIGSADKVQVQEMVTRILKLSDKPQADAADALAIAITHAHSIQHSLHIANSVKMTETQEKMTALLKTRYSRGRFRLKI.

Active-site residues include Asp-8, Glu-67, and Asp-139. 3 residues coordinate Mg(2+): Asp-8, Glu-67, and Asp-139.

It belongs to the RuvC family. Homodimer which binds Holliday junction (HJ) DNA. The HJ becomes 2-fold symmetrical on binding to RuvC with unstacked arms; it has a different conformation from HJ DNA in complex with RuvA. In the full resolvosome a probable DNA-RuvA(4)-RuvB(12)-RuvC(2) complex forms which resolves the HJ. It depends on Mg(2+) as a cofactor.

It is found in the cytoplasm. The catalysed reaction is Endonucleolytic cleavage at a junction such as a reciprocal single-stranded crossover between two homologous DNA duplexes (Holliday junction).. Functionally, the RuvA-RuvB-RuvC complex processes Holliday junction (HJ) DNA during genetic recombination and DNA repair. Endonuclease that resolves HJ intermediates. Cleaves cruciform DNA by making single-stranded nicks across the HJ at symmetrical positions within the homologous arms, yielding a 5'-phosphate and a 3'-hydroxyl group; requires a central core of homology in the junction. The consensus cleavage sequence is 5'-(A/T)TT(C/G)-3'. Cleavage occurs on the 3'-side of the TT dinucleotide at the point of strand exchange. HJ branch migration catalyzed by RuvA-RuvB allows RuvC to scan DNA until it finds its consensus sequence, where it cleaves and resolves the cruciform DNA. This is Crossover junction endodeoxyribonuclease RuvC from Haemophilus influenzae (strain 86-028NP).